An 849-amino-acid polypeptide reads, in one-letter code: Leucine--tRNA ligase (849 aa).

Residues Pro44–His54 carry the 'HIGH' region motif. The 'KMSKS' region signature appears at Lys620–Ser624. Lys623 contacts ATP.

It belongs to the class-I aminoacyl-tRNA synthetase family.

The protein localises to the cytoplasm. It carries out the reaction tRNA(Leu) + L-leucine + ATP = L-leucyl-tRNA(Leu) + AMP + diphosphate. This Sphingopyxis alaskensis (strain DSM 13593 / LMG 18877 / RB2256) (Sphingomonas alaskensis) protein is Leucine--tRNA ligase.